Here is a 151-residue protein sequence, read N- to C-terminus: UPF0756 membrane protein GWCH70_2680 (151 aa).

4 helical membrane passes run 5–25 (ILFL…SLMI), 53–73 (WGVT…EIGF), 86–106 (WIAL…VTLL), and 116–136 (LVFG…GPLI).

It belongs to the UPF0756 family.

The protein resides in the cell membrane. The polypeptide is UPF0756 membrane protein GWCH70_2680 (Geobacillus sp. (strain WCH70)).